The primary structure comprises 207 residues: LexA repressor (207 aa).

The H-T-H motif DNA-binding region spans 28 to 48 (VREIAVAVGLASSSTVHGHLE). Catalysis depends on for autocatalytic cleavage activity residues Ser-129 and Lys-167.

The protein belongs to the peptidase S24 family. As to quaternary structure, homodimer.

The catalysed reaction is Hydrolysis of Ala-|-Gly bond in repressor LexA.. In terms of biological role, represses a number of genes involved in the response to DNA damage (SOS response), including recA and lexA. In the presence of single-stranded DNA, RecA interacts with LexA causing an autocatalytic cleavage which disrupts the DNA-binding part of LexA, leading to derepression of the SOS regulon and eventually DNA repair. The polypeptide is LexA repressor (Oceanobacillus iheyensis (strain DSM 14371 / CIP 107618 / JCM 11309 / KCTC 3954 / HTE831)).